We begin with the raw amino-acid sequence, 370 residues long: Platelet-derived growth factor D (370 aa).

The first 18 residues, 1 to 18 (MHRLIFVYTLICANFCSC), serve as a signal peptide directing secretion. The 119-residue stretch at 52–170 (RDETIQVKGN…PGFKIYYSLL (119 aa)) folds into the CUB domain. Cys-109 and Cys-131 are joined by a disulfide. Residue Asn-276 is glycosylated (N-linked (GlcNAc...) asparagine). Disulfide bonds link Cys-302-Cys-360 and Cys-306-Cys-362.

It belongs to the PDGF/VEGF growth factor family. As to quaternary structure, homodimer; disulfide-linked. Interacts with PDGFRB homodimers, and with heterodimers formed by PDGFRA and PDGFRB. In terms of processing, activated by proteolytic cleavage. Proteolytic removal of the N-terminal CUB domain releasing the core domain is necessary for unmasking the receptor-binding epitopes of the core domain. Cleavage after Arg-247 or Arg-249 by urokinase plasminogen activator gives rise to the active form. As to expression, expressed at high levels in the heart, pancreas, adrenal gland and ovary and at low levels in placenta, liver, kidney, prostate, testis, small intestine, spleen and colon. In the kidney, expressed by the visceral epithelial cells of the glomeruli. A widespread expression is also seen in the medial smooth muscle cells of arteries and arterioles, as well as in smooth muscle cells of vasa rectae in the medullary area. Expressed in the adventitial connective tissue surrounding the suprarenal artery. In chronic obstructive nephropathy, a persistent expression is seen in glomerular visceral epithelial cells and vascular smooth muscle cells, as well as de novo expression by periglomerular interstitial cells and by some neointimal cells of atherosclerotic vessels. Expression in normal prostate is seen preferentially in the mesenchyme of the gland while expression is increased and more profuse in prostate carcinoma. Expressed in many ovarian, lung, renal and brain cancer-derived cell lines.

The protein resides in the secreted. Growth factor that plays an essential role in the regulation of embryonic development, cell proliferation, cell migration, survival and chemotaxis. Potent mitogen for cells of mesenchymal origin. Plays an important role in wound healing. Induces macrophage recruitment, increased interstitial pressure, and blood vessel maturation during angiogenesis. Can initiate events that lead to a mesangial proliferative glomerulonephritis, including influx of monocytes and macrophages and production of extracellular matrix. In Homo sapiens (Human), this protein is Platelet-derived growth factor D (PDGFD).